A 399-amino-acid chain; its full sequence is Centrosomal protein 43 (399 aa).

Residues Asp70–Gln102 form the LisH domain. Disordered regions lie at residues Pro142–Ser216 and Asp236–Ser311. A phosphoserine mark is found at Ser152 and Ser160. The span at Gly163–Ser172 shows a compositional bias: polar residues. Residue Thr170 is modified to Phosphothreonine. Positions Pro175–Ile186 are enriched in basic residues. A compositionally biased stretch (low complexity) spans Ser197–Ser216. Residue Ser202 is modified to Phosphoserine. Residues Asp246–Phe256 are compositionally biased toward acidic residues. Over residues Pro259–Lys275 the composition is skewed to basic and acidic residues. The span at Arg290–Leu302 shows a compositional bias: low complexity. Phosphoserine occurs at positions 301 and 326. The tract at residues Gly328–Ser354 is disordered. Position 337 is a phosphotyrosine (Tyr337).

The protein belongs to the CEP43 family. In terms of assembly, homodimer. Part of a ternary complex that contains CEP350, CEP43 and MAPRE1. Interacts directly with CEP350 and MAPRE1. Interacts with CEP19. Interacts (via N-terminus) with CEP350 (via C-terminus).

It localises to the cytoplasm. The protein resides in the cytoskeleton. The protein localises to the microtubule organizing center. It is found in the centrosome. Its subcellular location is the centriole. It localises to the cilium basal body. Its function is as follows. Required for anchoring microtubules to the centrosomes. Required for ciliation. This is Centrosomal protein 43 from Mus musculus (Mouse).